A 625-amino-acid polypeptide reads, in one-letter code: Probable potassium transport system protein Kup (625 aa).

Transmembrane regions (helical) follow at residues 13–33, 53–73, 103–123, 141–161, 172–192, 206–226, 250–270, 282–302, 340–360, 369–389, 400–420, and 422–442; these read TALA…LYAL, ILSI…VAIV, IYMI…GIIT, VFDP…FLVQ, FGPI…HSVI, AIQF…AVVL, WFFV…ALLL, LLVP…ATVI, IYVP…ILIF, AYGL…AVFI, VLLL…ATSL, and ILSG…ILMT.

Belongs to the HAK/KUP transporter (TC 2.A.72) family.

It is found in the cell inner membrane. The enzyme catalyses K(+)(in) + H(+)(in) = K(+)(out) + H(+)(out). In terms of biological role, transport of potassium into the cell. Likely operates as a K(+):H(+) symporter. This chain is Probable potassium transport system protein Kup, found in Acinetobacter baumannii (strain AYE).